Here is a 486-residue protein sequence, read N- to C-terminus: Serine/threonine-protein phosphatase 2A 56 kDa regulatory subunit alpha isoform (486 aa).

Over residues 1–18 (MSSSSPPAGAASAAISAS) the composition is skewed to low complexity. Residues 1–52 (MSSSSPPAGAASAAISASEKVDGFTRKSVRKAQRQKRSQGSSQFRSQGSQAE) form a disordered region. Ser2 bears the N-acetylserine mark. The span at 27-37 (KSVRKAQRQKR) shows a compositional bias: basic residues. Residues 38-51 (SQGSSQFRSQGSQA) are compositionally biased toward low complexity. Phosphoserine occurs at positions 41, 42, and 49.

This sequence belongs to the phosphatase 2A regulatory subunit B56 family. As to quaternary structure, PP2A consists of a common heterodimeric core enzyme, composed of a 36 kDa catalytic subunit (subunit C) and a 65 kDa constant regulatory subunit (PR65 or subunit A), that associates with a variety of regulatory subunits. Proteins that associate with the core dimer include three families of regulatory subunits B (the R2/B/PR55/B55, R3/B''/PR72/PR130/PR59 and R5/B'/B56 families), the 48 kDa variable regulatory subunit, viral proteins, and cell signaling molecules. Interacts with SGO1. Post-translationally, phosphorylated on serine residues. Widely expressed with the highest expression in heart and skeletal muscle.

The protein resides in the cytoplasm. It is found in the nucleus. Its subcellular location is the chromosome. The protein localises to the centromere. Its function is as follows. The B regulatory subunit might modulate substrate selectivity and catalytic activity, and might also direct the localization of the catalytic enzyme to a particular subcellular compartment. The protein is Serine/threonine-protein phosphatase 2A 56 kDa regulatory subunit alpha isoform (PPP2R5A) of Homo sapiens (Human).